Here is a 616-residue protein sequence, read N- to C-terminus: Dihydroxy-acid dehydratase (616 aa).

Residue Asp81 coordinates Mg(2+). Residue Cys122 coordinates [2Fe-2S] cluster. Residues Asp123 and Lys124 each contribute to the Mg(2+) site. Lys124 bears the N6-carboxylysine mark. Cys195 is a [2Fe-2S] cluster binding site. Position 491 (Glu491) interacts with Mg(2+). Ser517 functions as the Proton acceptor in the catalytic mechanism.

The protein belongs to the IlvD/Edd family. In terms of assembly, homodimer. [2Fe-2S] cluster is required as a cofactor. The cofactor is Mg(2+).

The enzyme catalyses (2R)-2,3-dihydroxy-3-methylbutanoate = 3-methyl-2-oxobutanoate + H2O. It catalyses the reaction (2R,3R)-2,3-dihydroxy-3-methylpentanoate = (S)-3-methyl-2-oxopentanoate + H2O. Its pathway is amino-acid biosynthesis; L-isoleucine biosynthesis; L-isoleucine from 2-oxobutanoate: step 3/4. The protein operates within amino-acid biosynthesis; L-valine biosynthesis; L-valine from pyruvate: step 3/4. Functionally, functions in the biosynthesis of branched-chain amino acids. Catalyzes the dehydration of (2R,3R)-2,3-dihydroxy-3-methylpentanoate (2,3-dihydroxy-3-methylvalerate) into 2-oxo-3-methylpentanoate (2-oxo-3-methylvalerate) and of (2R)-2,3-dihydroxy-3-methylbutanoate (2,3-dihydroxyisovalerate) into 2-oxo-3-methylbutanoate (2-oxoisovalerate), the penultimate precursor to L-isoleucine and L-valine, respectively. The polypeptide is Dihydroxy-acid dehydratase (Shewanella sediminis (strain HAW-EB3)).